Here is a 78-residue protein sequence, read N- to C-terminus: Conotoxin Bu2 (78 aa).

Positions 1–19 (MKLTCVLIIAVLFLTAITA) are cleaved as a signal peptide. A propeptide spanning residues 20 to 41 (DDSRDKQVYRAVGLIDKMRRIR) is cleaved from the precursor. 3 disulfides stabilise this stretch: Cys-46-Cys-59, Cys-53-Cys-64, and Cys-58-Cys-73.

This sequence belongs to the conotoxin O1 superfamily. As to expression, expressed by the venom duct.

Its subcellular location is the secreted. This chain is Conotoxin Bu2, found in Conus bullatus (Bubble cone).